The primary structure comprises 85 residues: Large ribosomal subunit protein bL27 (85 aa).

The interval 1 to 20 is disordered; that stretch reads MAHKKAGGSTRNGRDSEAKR.

This sequence belongs to the bacterial ribosomal protein bL27 family.

The chain is Large ribosomal subunit protein bL27 from Escherichia coli O139:H28 (strain E24377A / ETEC).